Reading from the N-terminus, the 320-residue chain is Undecaprenyl-diphosphatase (320 aa).

8 helical membrane-spanning segments follow: residues F9–F29, G82–W102, L130–I150, L161–L181, L191–V211, F236–A256, L265–L285, and V296–I316.

Belongs to the UppP family.

Its subcellular location is the cell inner membrane. The catalysed reaction is di-trans,octa-cis-undecaprenyl diphosphate + H2O = di-trans,octa-cis-undecaprenyl phosphate + phosphate + H(+). Its function is as follows. Catalyzes the dephosphorylation of undecaprenyl diphosphate (UPP). Confers resistance to bacitracin. The protein is Undecaprenyl-diphosphatase of Trichormus variabilis (strain ATCC 29413 / PCC 7937) (Anabaena variabilis).